A 345-amino-acid polypeptide reads, in one-letter code: Isopentenyl-diphosphate delta-isomerase (345 aa).

R14–K15 contributes to the substrate binding site. Residues S71, S72–T74, S102, and N130 each bind FMN. Position 102–104 (S102–R104) interacts with substrate. Substrate is bound at residue Q165. E166 is a Mg(2+) binding site. Residues K197, T227, G277–K279, and A298–G299 contribute to the FMN site.

Belongs to the IPP isomerase type 2 family. In terms of assembly, homooctamer. Dimer of tetramers. The cofactor is FMN. NADPH serves as cofactor. Requires Mg(2+) as cofactor.

It localises to the cytoplasm. The catalysed reaction is isopentenyl diphosphate = dimethylallyl diphosphate. Its function is as follows. Involved in the biosynthesis of isoprenoids. Catalyzes the 1,3-allylic rearrangement of the homoallylic substrate isopentenyl (IPP) to its allylic isomer, dimethylallyl diphosphate (DMAPP). In Rickettsia felis (strain ATCC VR-1525 / URRWXCal2) (Rickettsia azadi), this protein is Isopentenyl-diphosphate delta-isomerase.